We begin with the raw amino-acid sequence, 361 residues long: Nicotinate-nucleotide--dimethylbenzimidazole phosphoribosyltransferase (361 aa).

Glutamate 315 serves as the catalytic Proton acceptor.

The protein belongs to the CobT family.

It carries out the reaction 5,6-dimethylbenzimidazole + nicotinate beta-D-ribonucleotide = alpha-ribazole 5'-phosphate + nicotinate + H(+). The protein operates within nucleoside biosynthesis; alpha-ribazole biosynthesis; alpha-ribazole from 5,6-dimethylbenzimidazole: step 1/2. Catalyzes the synthesis of alpha-ribazole-5'-phosphate from nicotinate mononucleotide (NAMN) and 5,6-dimethylbenzimidazole (DMB). The sequence is that of Nicotinate-nucleotide--dimethylbenzimidazole phosphoribosyltransferase from Clostridium perfringens (strain ATCC 13124 / DSM 756 / JCM 1290 / NCIMB 6125 / NCTC 8237 / Type A).